Here is a 317-residue protein sequence, read N- to C-terminus: GTPase Era (317 aa).

The Era-type G domain occupies Arg-23 to Glu-190. A G1 region spans residues Gly-31 to Ser-38. A GTP-binding site is contributed by Gly-31–Ser-38. The G2 stretch occupies residues Gln-57–Ala-61. The G3 stretch occupies residues Asp-78–Gly-81. Residues Asp-78–Ile-82 and Asn-140–Asp-143 each bind GTP. The tract at residues Asn-140–Asp-143 is G4. The segment at Ile-169 to Ala-171 is G5. Residues Leu-221–Glu-298 form the KH type-2 domain.

Belongs to the TRAFAC class TrmE-Era-EngA-EngB-Septin-like GTPase superfamily. Era GTPase family. Monomer.

It is found in the cytoplasm. Its subcellular location is the cell inner membrane. In terms of biological role, an essential GTPase that binds both GDP and GTP, with rapid nucleotide exchange. Plays a role in 16S rRNA processing and 30S ribosomal subunit biogenesis and possibly also in cell cycle regulation and energy metabolism. This chain is GTPase Era, found in Agrobacterium fabrum (strain C58 / ATCC 33970) (Agrobacterium tumefaciens (strain C58)).